Reading from the N-terminus, the 675-residue chain is MNPYQNKSECEILNAPLNNINMPNRYPFANDPNAVMKNGNYKDWLNECDGITPSIFGTLGVLASIVISTINLATSPSIGDAFALVSSIGEYWPETKTSFPLSVADVNRLIREALDQNAINRATGKFNGLMDTYNTVYLKNLQDWYDTRIPANPQGDSQLREAARRSLEEIERDFRKALAGEFAEAGSQIVLLPIYAQAANIHLLILKDAMQFRTDLGLIRPVGVPITTSAEDPFESEFLLRIKKYTDHCISYYDDGLAKIRSRGSDGETWWEFNKFRREMTLTVLDLVALYPTHNIKLYPIPTQTELSRVVYTDPVGCFGNRKSDIFSRLNFDYLENRLTRPREPFNYLNSVQLFASTVSNSNNGEVLRGNLNKIMFEGGWTASRSGDGVTTGTPFSTMDWSYGWGYPRKHYAEITSRSQALPGLNNSIHVIVGIDSFRAIGPGGQGDHTFSLPGGDMYDCGKVQINPLEDYRNSDHWISDMMTINQSVQLASNPTQTFAFSALSLGWHHSSAGNRNVYVYDKITQIPATKTVREHPMIKGPGFTGGDLADLSSNSDILQYDLRSDYDDRLTEDVPFRIRIRCASIGVSTISVDNWGSSSPQVTVASTAASLDTLKYESFQYVSIPGNYYFDSAPRIRLLRQPGRLLVDRIEIIPVNFFPLSEQENKSVDSLFIN.

Belongs to the delta endotoxin family.

Promotes colloidosmotic lysis by binding to the midgut epithelial cells of insects. The polypeptide is Pesticidal crystal protein Cry25Aa (cry25Aa) (Bacillus thuringiensis subsp. jegathesan).